The chain runs to 301 residues: Formamidopyrimidine-DNA glycosylase (301 aa).

Pro2 serves as the catalytic Schiff-base intermediate with DNA. The active-site Proton donor is Glu3. Lys58 functions as the Proton donor; for beta-elimination activity in the catalytic mechanism. His109, Arg131, and Lys174 together coordinate DNA. An FPG-type zinc finger spans residues 265–301; the sequence is SVYDREGQACRTPGCGGTVARIVQAGRSTFYCATCQK. Arg291 (proton donor; for delta-elimination activity) is an active-site residue.

This sequence belongs to the FPG family. Monomer. Requires Zn(2+) as cofactor.

It catalyses the reaction Hydrolysis of DNA containing ring-opened 7-methylguanine residues, releasing 2,6-diamino-4-hydroxy-5-(N-methyl)formamidopyrimidine.. The catalysed reaction is 2'-deoxyribonucleotide-(2'-deoxyribose 5'-phosphate)-2'-deoxyribonucleotide-DNA = a 3'-end 2'-deoxyribonucleotide-(2,3-dehydro-2,3-deoxyribose 5'-phosphate)-DNA + a 5'-end 5'-phospho-2'-deoxyribonucleoside-DNA + H(+). Functionally, involved in base excision repair of DNA damaged by oxidation or by mutagenic agents. Acts as a DNA glycosylase that recognizes and removes damaged bases. Has a preference for oxidized purines, such as 7,8-dihydro-8-oxoguanine (8-oxoG). Has AP (apurinic/apyrimidinic) lyase activity and introduces nicks in the DNA strand. Cleaves the DNA backbone by beta-delta elimination to generate a single-strand break at the site of the removed base with both 3'- and 5'-phosphates. In Rhizobium leguminosarum bv. trifolii (strain WSM2304), this protein is Formamidopyrimidine-DNA glycosylase.